Reading from the N-terminus, the 533-residue chain is Protein translocase subunit SecD (533 aa).

The next 6 helical transmembrane spans lie at 8-28 (ALLV…TFVS), 377-397 (IVGG…GGVV), 400-420 (LALA…GFTL), 422-442 (LPGI…NVLI), 469-489 (LTIL…LQFG), and 495-515 (GFAV…IFVT).

The protein belongs to the SecD/SecF family. SecD subfamily. As to quaternary structure, forms a complex with SecF. Part of the essential Sec protein translocation apparatus which comprises SecA, SecYEG and auxiliary proteins SecDF-YajC and YidC.

The protein resides in the cell inner membrane. Functionally, part of the Sec protein translocase complex. Interacts with the SecYEG preprotein conducting channel. SecDF uses the proton motive force (PMF) to complete protein translocation after the ATP-dependent function of SecA. The polypeptide is Protein translocase subunit SecD (Syntrophobacter fumaroxidans (strain DSM 10017 / MPOB)).